The following is a 95-amino-acid chain: Co-chaperonin GroES (95 aa).

It belongs to the GroES chaperonin family. As to quaternary structure, heptamer of 7 subunits arranged in a ring. Interacts with the chaperonin GroEL.

The protein localises to the cytoplasm. In terms of biological role, together with the chaperonin GroEL, plays an essential role in assisting protein folding. The GroEL-GroES system forms a nano-cage that allows encapsulation of the non-native substrate proteins and provides a physical environment optimized to promote and accelerate protein folding. GroES binds to the apical surface of the GroEL ring, thereby capping the opening of the GroEL channel. The sequence is that of Co-chaperonin GroES from Pelodictyon phaeoclathratiforme (strain DSM 5477 / BU-1).